Here is a 1350-residue protein sequence, read N- to C-terminus: uncharacterized protein (1350 aa).

2 disordered regions span residues 348-371 and 923-944; these read SLVG…LDDS and SKME…RGTG. A compositionally biased stretch (basic and acidic residues) spans 923–932; that stretch reads SKMEGGERDA.

This is an uncharacterized protein from Ictalurid herpesvirus 1 (strain Auburn) (IcHV-1).